Here is a 471-residue protein sequence, read N- to C-terminus: Glutamate--tRNA ligase (471 aa).

The short motif at 9 to 19 (PSPTGYLHVGG) is the 'HIGH' region element. The 'KMSKS' region signature appears at 237–241 (KLSKR). Lys-240 lines the ATP pocket.

It belongs to the class-I aminoacyl-tRNA synthetase family. Glutamate--tRNA ligase type 1 subfamily. Monomer.

It localises to the cytoplasm. It carries out the reaction tRNA(Glu) + L-glutamate + ATP = L-glutamyl-tRNA(Glu) + AMP + diphosphate. In terms of biological role, catalyzes the attachment of glutamate to tRNA(Glu) in a two-step reaction: glutamate is first activated by ATP to form Glu-AMP and then transferred to the acceptor end of tRNA(Glu). The polypeptide is Glutamate--tRNA ligase (Pectobacterium atrosepticum (strain SCRI 1043 / ATCC BAA-672) (Erwinia carotovora subsp. atroseptica)).